A 588-amino-acid polypeptide reads, in one-letter code: MPKPLIIFKDFSFQYYSQQTPTLNQINLTIYEGQKVLIVGKNGSGKSTFLKCINGLIPHSYQGKITGTAIIKDKVLTQTNIFDLSLDVGTIMQDTDNQFVGLTVAEDIAFALENDDLPQSEIYQKVNMWAQDLGLQSFLDYKPQELSEGHKQLASMAGVLIYNPSILLFDESLSNLDPVSRAKMTALIKTIHQKYHSTILVIEHYLEDILDDSFDRVIVFEDEKIIYDNSPQKLILENILTKQGIQEPTYISALKKVGINLGSLPYLLNLPALQSLDFVQYFSNQLTNLKKCAISQNDPTQLLPFFPKQFAPFCPILQLQNISYHYESKQPNILNDISLDLFPGKMISIVGKNGSGKSTLAKVICGFSNPQTGTILLNNQDLTHLSLQQRSEKIGFVMQNPHHMISQKTVFEEVALGLLGKQLSLTEIKTKVHAILKTCNLDCFVNRPISALSFGQKKRLTIASILVMQPQILILDEPTIGQDLKHHTQIMTFLQKLNNKGITIIIITHDMSLMLNYTQRTLVLEQGKIIANTTPLKIFTDMSLMQKTSLNPISLIVLINKLPFTSEQKNVLLTQMLAFLKEDCCYGK.

2 consecutive ABC transporter domains span residues 6-247 (IIFK…GIQE) and 317-551 (LQLQ…TSLN). ATP is bound by residues 40–47 (GKNGSGKS) and 351–358 (GKNGSGKS).

This sequence belongs to the ABC transporter superfamily.

The protein localises to the cell membrane. Functionally, probably part of an ABC transporter complex. Responsible for energy coupling to the transport system. This chain is Putative ABC transporter ATP-binding protein PAM_020, found in Onion yellows phytoplasma (strain OY-M).